A 95-amino-acid polypeptide reads, in one-letter code: uncharacterized protein (95 aa).

This sequence belongs to the inositol monophosphatase superfamily.

This is an uncharacterized protein from Rhizobium leguminosarum bv. phaseoli.